The sequence spans 449 residues: Lysine-sensitive aspartokinase 3 (449 aa).

Residues S2–F245 are aspartokinase. Position 8–11 (K8–G11) interacts with ATP. Residues T45, E119, and R198–S201 each bind substrate. ATP-binding positions include T221–D222, Y227, R232, and K257–V258. The interval A246–E449 is interface. The segment at F299–E449 is required for homodimerization. The ACT domain occupies L313–N394. Residues M318, S321, F324–L325, S338–D340, and S345–E346 contribute to the L-lysine site.

Belongs to the aspartokinase family. As to quaternary structure, homodimer. In the inactive form a homotetramer is formed.

The catalysed reaction is L-aspartate + ATP = 4-phospho-L-aspartate + ADP. Its pathway is amino-acid biosynthesis; L-lysine biosynthesis via DAP pathway; (S)-tetrahydrodipicolinate from L-aspartate: step 1/4. Synthesis and activity are sensitive to the allosteric inhibitor lysine, one of the end metabolites of the aspartic acid family branched pathway. The protein is Lysine-sensitive aspartokinase 3 (lysC) of Escherichia coli (strain K12).